The chain runs to 313 residues: Deoxyribonucleoside regulator (313 aa).

A DNA-binding region (H-T-H motif) is located at residues 23-42; it reads QQQIAEQLNISRPTVSRLLQ.

It belongs to the SorC transcriptional regulatory family. Homooctamer.

Functionally, negative regulator of the dra-nupC-pdp operon. DeoR binds cooperatively to the operator DNA, which consists of a palindrome and a direct repeat sequence located 3' to the palindrome. The sequence is that of Deoxyribonucleoside regulator from Bacillus subtilis (strain 168).